Consider the following 730-residue polypeptide: Propionyl-CoA carboxylase alpha chain, mitochondrial (730 aa).

The N-terminal 52 residues, 1-52 (MAGLWVGGSVLVAAGRRGSRSPRPLMRSVALWTLKHVPQYSRQRLLVSRSLC), are a transit peptide targeting the mitochondrion. The 448-residue stretch at 62-509 (TFDKILIANR…NTKFLSDVYP (448 aa)) folds into the Biotin carboxylation domain. Residue K65 is modified to N6-acetyllysine; alternate. K65 carries the post-translational modification N6-succinyllysine; alternate. Residue K119 is modified to N6-succinyllysine. K150 carries the post-translational modification N6-acetyllysine; alternate. K150 carries the post-translational modification N6-succinyllysine; alternate. An N6-acetyllysine modification is found at K154. An ATP-binding site is contributed by K177. The region spanning 181–378 (KLLAKKAKVN…LVQEMIRVAK (198 aa)) is the ATP-grasp domain. K188 is modified (N6-succinyllysine). An N6-acetyllysine; alternate modification is found at K200. At K200 the chain carries N6-succinyllysine; alternate. Residues 209-270 (AREI…PRHI), E261, and N296 each bind ATP. S252 bears the Phosphoserine mark. The residue at position 262 (K262) is an N6-succinyllysine. Mg(2+) is bound by residues E336, E349, and N351. E336, E349, and N351 together coordinate Mn(2+). The active site involves E349. At K407 the chain carries N6-succinyllysine. A biotin-binding site is contributed by F409. Residues K502, K513, and K650 each carry the N6-succinyllysine modification. Residues 655–730 (KAAEDTSSIL…GEGDLLVELE (76 aa)) form the Biotinyl-binding domain. K696 carries the post-translational modification N6-biotinyllysine.

In terms of assembly, the holoenzyme is a dodecamer composed of 6 PCCA/alpha subunits and 6 PCCB/beta subunits. Interacts (via the biotin carboxylation domain) with SIRT4. Interacts with SIRT3 and SIRT5. Mg(2+) is required as a cofactor. Requires Mn(2+) as cofactor. The cofactor is biotin. In terms of processing, acetylated. Post-translationally, the biotin cofactor is covalently attached to the C-terminal biotinyl-binding domain and is required for the catalytic activity. Biotinylation is catalyzed by HLCS.

Its subcellular location is the mitochondrion matrix. It catalyses the reaction propanoyl-CoA + hydrogencarbonate + ATP = (S)-methylmalonyl-CoA + ADP + phosphate + H(+). The catalysed reaction is butanoyl-CoA + hydrogencarbonate + ATP = (2S)-ethylmalonyl-CoA + ADP + phosphate + H(+). It functions in the pathway metabolic intermediate metabolism; propanoyl-CoA degradation; succinyl-CoA from propanoyl-CoA: step 1/3. In terms of biological role, this is one of the 2 subunits of the biotin-dependent propionyl-CoA carboxylase (PCC), a mitochondrial enzyme involved in the catabolism of odd chain fatty acids, branched-chain amino acids isoleucine, threonine, methionine, and valine and other metabolites. Propionyl-CoA carboxylase catalyzes the carboxylation of propionyl-CoA/propanoyl-CoA to D-methylmalonyl-CoA/(S)-methylmalonyl-CoA. Within the holoenzyme, the alpha subunit catalyzes the ATP-dependent carboxylation of the biotin carried by the biotin carboxyl carrier (BCC) domain, while the beta subunit then tranfers the carboxyl group from carboxylated biotin to propionyl-CoA. Propionyl-CoA carboxylase also significantly acts on butyryl-CoA/butanoyl-CoA, which is converted to ethylmalonyl-CoA/(2S)-ethylmalonyl-CoA at a much lower rate. Other alternative minor substrates include (2E)-butenoyl-CoA/crotonoyl-CoA. This Sus scrofa (Pig) protein is Propionyl-CoA carboxylase alpha chain, mitochondrial.